Reading from the N-terminus, the 360-residue chain is GDSL esterase/lipase At2g31540 (360 aa).

The signal sequence occupies residues 1 to 23 (MSTSKAITLTLFIATTLLAPCNA). Residue Ser42 is the Nucleophile of the active site. Asn104 and Asn326 each carry an N-linked (GlcNAc...) asparagine glycan. Active-site residues include Asp334 and His337.

It belongs to the 'GDSL' lipolytic enzyme family.

Its subcellular location is the secreted. In Arabidopsis thaliana (Mouse-ear cress), this protein is GDSL esterase/lipase At2g31540.